The following is a 235-amino-acid chain: Sugar fermentation stimulation protein homolog (235 aa).

This sequence belongs to the SfsA family.

This is Sugar fermentation stimulation protein homolog from Pseudomonas aeruginosa (strain LESB58).